A 455-amino-acid polypeptide reads, in one-letter code: MKKIEMYHHKKVLVLGLARSGVSAATIMHKLGAFVTVNDQKPFSENPEAQGLLEQGIKVICGSHPIELLDEGFELVIKNPGIPYNNPMIEKALKLKIPVITEVELAYQISEAPIVGITGTNGKTTTTTIIHHMLNAHKENSSLLAGNIGFPASAVAENATSDQYISMELSSFQLMGVETFKPHISVITNIYEAHLDYHTDRSEYVQAKWHIQKNQTADDFLVINWDQEELKNLTKQTKAQVIPFSTTQRLGQGSYVQNGNIMFNDEVIGARDNILLPGEHNLENVLASVAVAKTLGVTNEEIMHVLETFKGVEHRTQFVVEWQGRKFYNDSKATNILATQSALKGFKNPVVLLAGGLDRGNSFDELLPFFKNVKALIVFGETADKIGRVGKIAGIDVHYVDNVEAAVPVAYRESAPGDIILLSPACASWDQYRTFEVRGNAYMDAIGELIEEVEK.

Residue 119–125 (GTNGKTT) coordinates ATP.

This sequence belongs to the MurCDEF family.

The protein resides in the cytoplasm. It catalyses the reaction UDP-N-acetyl-alpha-D-muramoyl-L-alanine + D-glutamate + ATP = UDP-N-acetyl-alpha-D-muramoyl-L-alanyl-D-glutamate + ADP + phosphate + H(+). It functions in the pathway cell wall biogenesis; peptidoglycan biosynthesis. Functionally, cell wall formation. Catalyzes the addition of glutamate to the nucleotide precursor UDP-N-acetylmuramoyl-L-alanine (UMA). The sequence is that of UDP-N-acetylmuramoylalanine--D-glutamate ligase from Listeria monocytogenes serotype 4b (strain F2365).